A 573-amino-acid chain; its full sequence is Sulfite reductase [NADPH] hemoprotein beta-component (573 aa).

The [4Fe-4S] cluster site is built by C438, C444, C483, and C487. C487 lines the siroheme pocket.

The protein belongs to the nitrite and sulfite reductase 4Fe-4S domain family. Alpha(8)-beta(8). The alpha component is a flavoprotein, the beta component is a hemoprotein. Siroheme serves as cofactor. The cofactor is [4Fe-4S] cluster.

It carries out the reaction hydrogen sulfide + 3 NADP(+) + 3 H2O = sulfite + 3 NADPH + 4 H(+). It functions in the pathway sulfur metabolism; hydrogen sulfide biosynthesis; hydrogen sulfide from sulfite (NADPH route): step 1/1. Its function is as follows. Component of the sulfite reductase complex that catalyzes the 6-electron reduction of sulfite to sulfide. This is one of several activities required for the biosynthesis of L-cysteine from sulfate. The protein is Sulfite reductase [NADPH] hemoprotein beta-component of Shouchella clausii (strain KSM-K16) (Alkalihalobacillus clausii).